We begin with the raw amino-acid sequence, 106 residues long: Isocitrate dehydrogenase [NAD] subunit gamma, mitochondrial (106 aa).

The protein belongs to the isocitrate and isopropylmalate dehydrogenases family. In terms of assembly, heterooligomer of subunits alpha (IDH3A), beta (IDH3B), and gamma (IDH3G) in the apparent ratio of 2:1:1. The heterodimer containing one IDH3A and one IDH3B subunit and the heterodimer containing one IDH3A and one IDH3G subunit assemble into a heterotetramer (which contains two subunits of IDH3A, one of IDH3B and one of IDH3G) and further into the heterooctamer.

It localises to the mitochondrion. Its activity is regulated as follows. The heterotetramer and the heterodimer composed of IDH3A and IDH3G subunits can be allosterically activated by citrate (CIT) or/and ADP, and the two activators can act independently or synergistically. The heterodimer composed of IDH3A and IDH3B subunits cannot be allosterically regulated and the allosteric regulation of the heterotetramer is through the IDH3G subunit and not the IDH3B subunit. The IDH3G subunit contains the allosteric site which consists of a CIT-binding site and an ADP-binding site, and the binding of CIT and ADP causes conformational changes at the allosteric site which are transmitted to the active site in the catalytic subunit (IDH3A) through a cascade of conformational changes at the heterodimer interface, leading to stabilization of the isocitrate-binding at the active site and thus activation of the enzyme. ATP can activate the heterotetramer and the heterodimer composed of IDH3A and IDH3G subunits at low concentrations but inhibits their activities at high concentrations, whereas ATP exhibits only inhibitory effect on the heterodimer composed of IDH3A and IDH3B subunits. Functionally, regulatory subunit which plays a role in the allosteric regulation of the enzyme catalyzing the decarboxylation of isocitrate (ICT) into alpha-ketoglutarate. The heterodimer composed of the alpha (IDH3A) and beta (IDH3B) subunits and the heterodimer composed of the alpha (IDH3A) and gamma (IDH3G) subunits, have considerable basal activity but the full activity of the heterotetramer (containing two subunits of IDH3A, one of IDH3B and one of IDH3G) requires the assembly and cooperative function of both heterodimers. This Sus scrofa (Pig) protein is Isocitrate dehydrogenase [NAD] subunit gamma, mitochondrial (IDH3G).